The sequence spans 431 residues: Adenylosuccinate lyase (431 aa).

N(6)-(1,2-dicarboxyethyl)-AMP-binding positions include 4–5 (RY), 67–69 (RHD), and 93–94 (TS). His141 acts as the Proton donor/acceptor in catalysis. Gln212 is a binding site for N(6)-(1,2-dicarboxyethyl)-AMP. Ser262 (proton donor/acceptor) is an active-site residue. N(6)-(1,2-dicarboxyethyl)-AMP is bound by residues Ser263, 268 to 270 (KRN), and 307 to 311 (SVERV).

This sequence belongs to the lyase 1 family. Adenylosuccinate lyase subfamily. In terms of assembly, homooligomer. Residues from neighboring subunits contribute catalytic and substrate-binding residues to each active site.

It catalyses the reaction N(6)-(1,2-dicarboxyethyl)-AMP = fumarate + AMP. The catalysed reaction is (2S)-2-[5-amino-1-(5-phospho-beta-D-ribosyl)imidazole-4-carboxamido]succinate = 5-amino-1-(5-phospho-beta-D-ribosyl)imidazole-4-carboxamide + fumarate. The protein operates within purine metabolism; AMP biosynthesis via de novo pathway; AMP from IMP: step 2/2. Its pathway is purine metabolism; IMP biosynthesis via de novo pathway; 5-amino-1-(5-phospho-D-ribosyl)imidazole-4-carboxamide from 5-amino-1-(5-phospho-D-ribosyl)imidazole-4-carboxylate: step 2/2. Catalyzes two reactions in de novo purine nucleotide biosynthesis. Catalyzes the breakdown of 5-aminoimidazole- (N-succinylocarboxamide) ribotide (SAICAR or 2-[5-amino-1-(5-phospho-beta-D-ribosyl)imidazole-4-carboxamido]succinate) to 5-aminoimidazole-4-carboxamide ribotide (AICAR or 5-amino-1-(5-phospho-beta-D-ribosyl)imidazole-4-carboxamide) and fumarate, and of adenylosuccinate (ADS or N(6)-(1,2-dicarboxyethyl)-AMP) to adenosine monophosphate (AMP) and fumarate. The sequence is that of Adenylosuccinate lyase (purB) from Synechocystis sp. (strain ATCC 27184 / PCC 6803 / Kazusa).